We begin with the raw amino-acid sequence, 351 residues long: Photosystem II D2 protein (351 aa).

The helical transmembrane segment at 39–59 (CSYLALGAWFTGTTFVTSWYT) threads the bilayer. His-116 serves as a coordination point for chlorophyll a. A helical transmembrane segment spans residues 123-139 (GFCLRQFEIARLVGLRP). Pheophytin a is bound by residues Gln-128 and Asn-141. The chain crosses the membrane as a helical span at residues 151-164 (VFVSVFLLYPLGQA). Position 196 (His-196) interacts with chlorophyll a. The helical transmembrane segment at 206-226 (GALLCAIHGATVQNTLFEDGE) threads the bilayer. Residues His-213 and Phe-260 each contribute to the a plastoquinone site. Residue His-213 participates in Fe cation binding. A Fe cation-binding site is contributed by His-267. The chain crosses the membrane as a helical span at residues 277–293 (GLWASSIGIVGLALNLR).

Belongs to the reaction center PufL/M/PsbA/D family. PSII is composed of 1 copy each of membrane proteins PsbA, PsbB, PsbC, PsbD, PsbE, PsbF, PsbH, PsbI, PsbJ, PsbK, PsbL, PsbM, PsbT, PsbX, PsbY, PsbZ, Psb30/Ycf12, at least 3 peripheral proteins of the oxygen-evolving complex and a large number of cofactors. It forms dimeric complexes. The cofactor is The D1/D2 heterodimer binds P680, chlorophylls that are the primary electron donor of PSII, and subsequent electron acceptors. It shares a non-heme iron and each subunit binds pheophytin, quinone, additional chlorophylls, carotenoids and lipids. There is also a Cl(-1) ion associated with D1 and D2, which is required for oxygen evolution. The PSII complex binds additional chlorophylls, carotenoids and specific lipids..

It is found in the plastid. The protein resides in the chloroplast thylakoid membrane. It carries out the reaction 2 a plastoquinone + 4 hnu + 2 H2O = 2 a plastoquinol + O2. Functionally, photosystem II (PSII) is a light-driven water:plastoquinone oxidoreductase that uses light energy to abstract electrons from H(2)O, generating O(2) and a proton gradient subsequently used for ATP formation. It consists of a core antenna complex that captures photons, and an electron transfer chain that converts photonic excitation into a charge separation. The D1/D2 (PsbA/PsbD) reaction center heterodimer binds P680, the primary electron donor of PSII as well as several subsequent electron acceptors. D2 is needed for assembly of a stable PSII complex. This is Photosystem II D2 protein from Cyanidioschyzon merolae (strain NIES-3377 / 10D) (Unicellular red alga).